The chain runs to 275 residues: uncharacterized protein (275 aa).

Polar residues predominate over residues 148–158 (TFPTTAPSITP). A disordered region spans residues 148 to 173 (TFPTTAPSITPGNKEGEKTTSTDTDE). The helical transmembrane segment at 187–207 (ILIAVTLLLSGVAIIVFVIFE) threads the bilayer. The interval 234–264 (GQPPGTAESKPDSQPQKVGQDAANSSNPKKA) is disordered. Positions 245–261 (DSQPQKVGQDAANSSNP) are enriched in polar residues.

The protein localises to the membrane. This is an uncharacterized protein from Homo sapiens (Human).